A 632-amino-acid polypeptide reads, in one-letter code: tRNA uridine 5-carboxymethylaminomethyl modification enzyme MnmG (632 aa).

FAD is bound by residues 15 to 20, V127, and S182; that span reads GAGHAG. Position 276-290 (276-290) interacts with NAD(+); the sequence is GARYCPSIEDKIVRF. Position 373 (Q373) interacts with FAD.

Belongs to the MnmG family. Homodimer. Heterotetramer of two MnmE and two MnmG subunits. It depends on FAD as a cofactor.

It localises to the cytoplasm. Its function is as follows. NAD-binding protein involved in the addition of a carboxymethylaminomethyl (cmnm) group at the wobble position (U34) of certain tRNAs, forming tRNA-cmnm(5)s(2)U34. This is tRNA uridine 5-carboxymethylaminomethyl modification enzyme MnmG from Enterococcus faecalis (strain ATCC 700802 / V583).